Reading from the N-terminus, the 503-residue chain is Cytochrome c lysine N-methyltransferase 1 (503 aa).

In terms of domain architecture, SET spans 52–276; the sequence is SKFELLRIPR…EEAQVFISYA (225 aa). The SET-like stretch occupies residues 190-291; the sequence is NYEKLISTVY…VHFEQIYGFL (102 aa).

This sequence belongs to the class V-like SAM-binding methyltransferase superfamily.

It localises to the cytoplasm. The protein localises to the cytosol. It carries out the reaction L-lysyl-[cytochrome c] + S-adenosyl-L-methionine = N(6)-methyl-L-lysyl-[cytochrome c] + S-adenosyl-L-homocysteine + H(+). Methyltransferase which mediates trimethylation of cytochrome c (CYC1). The polypeptide is Cytochrome c lysine N-methyltransferase 1 (CTM1) (Kluyveromyces lactis (strain ATCC 8585 / CBS 2359 / DSM 70799 / NBRC 1267 / NRRL Y-1140 / WM37) (Yeast)).